The following is a 341-amino-acid chain: HTH-type transcriptional repressor PurR (341 aa).

The 55-residue stretch at 2–56 (ATIKDVAKRANVSTTTVSHVINKTRFVAEETRNAVWAAIKELHYSPSAVARSLKV) folds into the HTH lacI-type domain. Positions 4-23 (IKDVAKRANVSTTTVSHVIN) form a DNA-binding region, H-T-H motif. The DNA-binding element occupies 48 to 56 (SAVARSLKV). Hypoxanthine contacts are provided by Tyr-73, Arg-190, Thr-192, Phe-221, and Asp-275.

As to quaternary structure, homodimer.

Its pathway is purine metabolism; purine nucleotide biosynthesis [regulation]. Functionally, is the main repressor of the genes involved in the de novo synthesis of purine nucleotides, regulating purB, purC, purEK, purF, purHD, purL, purMN and guaBA expression. PurR is allosterically activated to bind its cognate DNA by binding the purine corepressors, hypoxanthine or guanine, thereby effecting transcription repression. This chain is HTH-type transcriptional repressor PurR, found in Escherichia fergusonii (strain ATCC 35469 / DSM 13698 / CCUG 18766 / IAM 14443 / JCM 21226 / LMG 7866 / NBRC 102419 / NCTC 12128 / CDC 0568-73).